The chain runs to 175 residues: ATP synthase subunit b (175 aa).

Residues 14–34 (LNPNPGLIFWTALTFLIVLVI) form a helical membrane-spanning segment.

The protein belongs to the ATPase B chain family. As to quaternary structure, F-type ATPases have 2 components, F(1) - the catalytic core - and F(0) - the membrane proton channel. F(1) has five subunits: alpha(3), beta(3), gamma(1), delta(1), epsilon(1). F(0) has four main subunits: a(1), b(2) and c(10-14). The alpha and beta chains form an alternating ring which encloses part of the gamma chain. F(1) is attached to F(0) by a central stalk formed by the gamma and epsilon chains, while a peripheral stalk is formed by the delta and b chains.

It is found in the cell inner membrane. F(1)F(0) ATP synthase produces ATP from ADP in the presence of a proton or sodium gradient. F-type ATPases consist of two structural domains, F(1) containing the extramembraneous catalytic core and F(0) containing the membrane proton channel, linked together by a central stalk and a peripheral stalk. During catalysis, ATP synthesis in the catalytic domain of F(1) is coupled via a rotary mechanism of the central stalk subunits to proton translocation. In terms of biological role, component of the F(0) channel, it forms part of the peripheral stalk, linking F(1) to F(0). This is ATP synthase subunit b from Chlorobaculum tepidum (strain ATCC 49652 / DSM 12025 / NBRC 103806 / TLS) (Chlorobium tepidum).